The following is a 119-amino-acid chain: Membrane-anchored ubiquitin-fold protein 3 (119 aa).

Residues 8–76 form the Ubiquitin-like domain; that stretch reads IEVKFRLFDG…NNRTLAESRV (69 aa). A Cysteine methyl ester modification is found at Cys-116. A lipid anchor (S-geranylgeranyl cysteine) is attached at Cys-116. A propeptide spans 117 to 119 (removed in mature form); that stretch reads TIL.

The protein resides in the cell membrane. In terms of biological role, may serve as docking site to facilitate the association of other proteins to the plasma membrane. The polypeptide is Membrane-anchored ubiquitin-fold protein 3 (MUB3) (Oryza sativa subsp. japonica (Rice)).